The primary structure comprises 65 residues: Small ribosomal subunit protein bS21 (65 aa).

Belongs to the bacterial ribosomal protein bS21 family.

This Cytophaga hutchinsonii (strain ATCC 33406 / DSM 1761 / CIP 103989 / NBRC 15051 / NCIMB 9469 / D465) protein is Small ribosomal subunit protein bS21.